A 251-amino-acid chain; its full sequence is Triosephosphate isomerase (251 aa).

Substrate is bound at residue 9-11; sequence NWK. Histidine 94 serves as the catalytic Electrophile. Glutamate 167 functions as the Proton acceptor in the catalytic mechanism. Residues glycine 173, serine 213, and 234–235 contribute to the substrate site; that span reads GG.

The protein belongs to the triosephosphate isomerase family. Homodimer.

It is found in the cytoplasm. The catalysed reaction is D-glyceraldehyde 3-phosphate = dihydroxyacetone phosphate. It participates in carbohydrate biosynthesis; gluconeogenesis. It functions in the pathway carbohydrate degradation; glycolysis; D-glyceraldehyde 3-phosphate from glycerone phosphate: step 1/1. In terms of biological role, involved in the gluconeogenesis. Catalyzes stereospecifically the conversion of dihydroxyacetone phosphate (DHAP) to D-glyceraldehyde-3-phosphate (G3P). The polypeptide is Triosephosphate isomerase (Finegoldia magna (strain ATCC 29328 / DSM 20472 / WAL 2508) (Peptostreptococcus magnus)).